The primary structure comprises 676 residues: DNA ligase (676 aa).

NAD(+) is bound by residues 42–46, 91–92, and Glu-121; these read DDVYD and SL. The N6-AMP-lysine intermediate role is filled by Lys-123. Residues Arg-144, Glu-178, Lys-294, and Lys-318 each coordinate NAD(+). The Zn(2+) site is built by Cys-412, Cys-415, Cys-430, and Cys-435. Residues 596–676 enclose the BRCT domain; the sequence is NSTSEFTGKR…QLQAAMDETK (81 aa).

This sequence belongs to the NAD-dependent DNA ligase family. LigA subfamily. The cofactor is Mg(2+). Mn(2+) is required as a cofactor.

The catalysed reaction is NAD(+) + (deoxyribonucleotide)n-3'-hydroxyl + 5'-phospho-(deoxyribonucleotide)m = (deoxyribonucleotide)n+m + AMP + beta-nicotinamide D-nucleotide.. In terms of biological role, DNA ligase that catalyzes the formation of phosphodiester linkages between 5'-phosphoryl and 3'-hydroxyl groups in double-stranded DNA using NAD as a coenzyme and as the energy source for the reaction. It is essential for DNA replication and repair of damaged DNA. The protein is DNA ligase of Levilactobacillus brevis (strain ATCC 367 / BCRC 12310 / CIP 105137 / JCM 1170 / LMG 11437 / NCIMB 947 / NCTC 947) (Lactobacillus brevis).